Here is a 514-residue protein sequence, read N- to C-terminus: Butyrophilin subfamily 2 member A2 (514 aa).

The signal sequence occupies residues 1–29 (MEPTTSLRSCPIASLLFFLVLSLFVLVSA). Residues 30–142 (QFTVIGPAEP…SYDQATMKLM (113 aa)) enclose the Ig-like V-type domain. Topologically, residues 30–244 (QFTVIGPAEP…ILIPESFVPS (215 aa)) are extracellular. 2 N-linked (GlcNAc...) asparagine glycosylation sites follow: N47 and N115. 2 cysteine pairs are disulfide-bonded: C52/C126 and C166/C220. The region spanning 150–232 (PLIKMKTLED…NNTLLSQEVE (83 aa)) is the Ig-like C2-type domain. The chain crosses the membrane as a helical span at residues 245–265 (LPLWMVAVAVTLPVVMLILLT). Residues 266–514 (SGSICLVKKH…PISQSLVRKP (249 aa)) lie on the Cytoplasmic side of the membrane. Positions 281–304 (ILSAEKEAEYEEKEAARQLQEELR) form a coiled coil. A B30.2/SPRY domain is found at 295–488 (AARQLQEELR…LFICPAFTGA (194 aa)).

The protein belongs to the immunoglobulin superfamily. BTN/MOG family. N-glycosylated. In terms of tissue distribution, widely expressed (at protein level). In the thymus, restricted to the corticomedullary junction, but not confined solely to epithelial cells (at protein level). Significant expression on naive B-cells, splenic natural killer cells, dendritic cells and peritoneal macrophages (at protein level). Negligible expression on naive T-cells up-regulated on activated T-cells (at protein level).

The protein resides in the membrane. In terms of biological role, inhibits the proliferation of CD4 and CD8 T-cells activated by anti-CD3 antibodies, T-cell metabolism and IL2 and IFNG secretion. The protein is Butyrophilin subfamily 2 member A2 (Btn2a2) of Mus musculus (Mouse).